Consider the following 89-residue polypeptide: Cell division topological specificity factor (89 aa).

This sequence belongs to the MinE family.

Its function is as follows. Prevents the cell division inhibition by proteins MinC and MinD at internal division sites while permitting inhibition at polar sites. This ensures cell division at the proper site by restricting the formation of a division septum at the midpoint of the long axis of the cell. The protein is Cell division topological specificity factor of Sodalis glossinidius (strain morsitans).